A 375-amino-acid polypeptide reads, in one-letter code: 4,4'-diaponeurosporenoate glycosyltransferase (375 aa).

4 consecutive transmembrane segments (helical) span residues 7–23 (LLHASTGLSLISGYLMY), 112–132 (ACYLGASYTVSDILIFMDADV), 280–300 (IMMLIILWMVGCITSFSGLAL), and 333–353 (FSILFLAINSILFLVFILVYI).

Belongs to the glycosyltransferase 2 family. CrtQ subfamily.

Its subcellular location is the cell membrane. It participates in carotenoid biosynthesis; staphyloxanthin biosynthesis; staphyloxanthin from farnesyl diphosphate: step 4/5. In terms of biological role, catalyzes the glycosylation of 4,4'-diaponeurosporenoate, i.e. the esterification of glucose at the C1'' position with the carboxyl group of 4,4'-diaponeurosporenic acid, to form glycosyl-4,4'-diaponeurosporenoate. This is a step in the biosynthesis of staphyloxanthin, an orange pigment present in most staphylococci strains. This Staphylococcus haemolyticus (strain JCSC1435) protein is 4,4'-diaponeurosporenoate glycosyltransferase (crtQ).